A 274-amino-acid chain; its full sequence is Large ribosomal subunit protein uL2cz/uL2cy (274 aa).

2 disordered regions span residues 1–24 and 223–274; these read MAIH…QVKS and MNPV…RRSK. A compositionally biased stretch (polar residues) spans 7–24; the sequence is KTSTPSTRNGTVDSQVKS.

It belongs to the universal ribosomal protein uL2 family. In terms of assembly, part of the 50S ribosomal subunit.

It is found in the plastid. The protein localises to the chloroplast. The protein is Large ribosomal subunit protein uL2cz/uL2cy (rpl2-A) of Nicotiana sylvestris (Wood tobacco).